We begin with the raw amino-acid sequence, 164 residues long: ATP synthase subunit b (164 aa).

A helical transmembrane segment spans residues 10–30; sequence LLISQIVNFCLLAFLLNTFLY.

Belongs to the ATPase B chain family. As to quaternary structure, F-type ATPases have 2 components, F(1) - the catalytic core - and F(0) - the membrane proton channel. F(1) has five subunits: alpha(3), beta(3), gamma(1), delta(1), epsilon(1). F(0) has three main subunits: a(1), b(2) and c(10-14). The alpha and beta chains form an alternating ring which encloses part of the gamma chain. F(1) is attached to F(0) by a central stalk formed by the gamma and epsilon chains, while a peripheral stalk is formed by the delta and b chains.

It localises to the cell membrane. Its function is as follows. F(1)F(0) ATP synthase produces ATP from ADP in the presence of a proton or sodium gradient. F-type ATPases consist of two structural domains, F(1) containing the extramembraneous catalytic core and F(0) containing the membrane proton channel, linked together by a central stalk and a peripheral stalk. During catalysis, ATP synthesis in the catalytic domain of F(1) is coupled via a rotary mechanism of the central stalk subunits to proton translocation. Functionally, component of the F(0) channel, it forms part of the peripheral stalk, linking F(1) to F(0). This Herpetosiphon aurantiacus (strain ATCC 23779 / DSM 785 / 114-95) protein is ATP synthase subunit b.